We begin with the raw amino-acid sequence, 438 residues long: Adenylosuccinate synthetase (438 aa).

Residues 13–19 (GDEGKGK) and 41–43 (GHT) contribute to the GTP site. Residue aspartate 14 is the Proton acceptor of the active site. Mg(2+)-binding residues include aspartate 14 and glycine 41. Residues 14–17 (DEGK), 39–42 (NAGH), threonine 130, arginine 144, glutamine 225, threonine 240, and arginine 312 contribute to the IMP site. Histidine 42 (proton donor) is an active-site residue. 308–314 (ATTGRQR) lines the substrate pocket. Residues arginine 314, 340 to 342 (KLD), and 422 to 424 (STG) contribute to the GTP site.

Belongs to the adenylosuccinate synthetase family. As to quaternary structure, homodimer. Mg(2+) is required as a cofactor.

The protein localises to the cytoplasm. The catalysed reaction is IMP + L-aspartate + GTP = N(6)-(1,2-dicarboxyethyl)-AMP + GDP + phosphate + 2 H(+). It participates in purine metabolism; AMP biosynthesis via de novo pathway; AMP from IMP: step 1/2. Plays an important role in the de novo pathway of purine nucleotide biosynthesis. Catalyzes the first committed step in the biosynthesis of AMP from IMP. The polypeptide is Adenylosuccinate synthetase (Ruthia magnifica subsp. Calyptogena magnifica).